Reading from the N-terminus, the 403-residue chain is Digeranylgeranylglycerophospholipid reductase 1 (403 aa).

A14, D33, C44, A45, G47, R98, V122, D277, G289, and I290 together coordinate FAD.

This sequence belongs to the geranylgeranyl reductase family. DGGGPL reductase subfamily. FAD is required as a cofactor.

The catalysed reaction is a 2,3-bis-O-phytanyl-sn-glycerol 1-phospholipid + 8 A = a 2,3-bis-O-(geranylgeranyl)-sn-glycerol 1-phospholipid + 8 AH2. It catalyses the reaction 2,3-bis-O-(phytanyl)-sn-glycerol 1-phosphate + 8 A = 2,3-bis-O-(geranylgeranyl)-sn-glycerol 1-phosphate + 8 AH2. It carries out the reaction CDP-2,3-bis-O-(geranylgeranyl)-sn-glycerol + 8 AH2 = CDP-2,3-bis-O-(phytanyl)-sn-glycerol + 8 A. The enzyme catalyses archaetidylserine + 8 AH2 = 2,3-bis-O-phytanyl-sn-glycero-3-phospho-L-serine + 8 A. Its pathway is membrane lipid metabolism; glycerophospholipid metabolism. Functionally, is involved in the reduction of 2,3-digeranylgeranylglycerophospholipids (unsaturated archaeols) into 2,3-diphytanylglycerophospholipids (saturated archaeols) in the biosynthesis of archaeal membrane lipids. Catalyzes the formation of archaetidic acid (2,3-di-O-phytanyl-sn-glyceryl phosphate) from 2,3-di-O-geranylgeranylglyceryl phosphate (DGGGP) via the hydrogenation of each double bond of the isoprenoid chains. Is also probably able to reduce double bonds of geranyl groups in CDP-2,3-bis-O-(geranylgeranyl)-sn-glycerol and archaetidylserine, thus acting at various stages in the biosynthesis of archaeal membrane lipids. This chain is Digeranylgeranylglycerophospholipid reductase 1, found in Methanosphaera stadtmanae (strain ATCC 43021 / DSM 3091 / JCM 11832 / MCB-3).